A 122-amino-acid chain; its full sequence is UPF0102 protein CTC_01256 (122 aa).

Belongs to the UPF0102 family.

This chain is UPF0102 protein CTC_01256, found in Clostridium tetani (strain Massachusetts / E88).